The following is a 137-amino-acid chain: MEQTLSIIKPDAVKKGVVGKIIDRFESNGLRIAAAKKLQLSVEDAKKFYEVHAARPFYGELVEFMTSGPVVVMVLEGDNAVVKNRELMGATNPKEAAAGTIRADFAESIDANAVHGSDSLENAKTEIAFFFAKREIC.

The ATP site is built by Lys-9, Phe-57, Arg-85, Thr-91, Arg-102, and Asn-112. The Pros-phosphohistidine intermediate role is filled by His-115.

It belongs to the NDK family. As to quaternary structure, homotetramer. Requires Mg(2+) as cofactor.

Its subcellular location is the cytoplasm. The catalysed reaction is a 2'-deoxyribonucleoside 5'-diphosphate + ATP = a 2'-deoxyribonucleoside 5'-triphosphate + ADP. It catalyses the reaction a ribonucleoside 5'-diphosphate + ATP = a ribonucleoside 5'-triphosphate + ADP. Major role in the synthesis of nucleoside triphosphates other than ATP. The ATP gamma phosphate is transferred to the NDP beta phosphate via a ping-pong mechanism, using a phosphorylated active-site intermediate. In Campylobacter fetus subsp. fetus (strain 82-40), this protein is Nucleoside diphosphate kinase.